The sequence spans 551 residues: Putative BTB/POZ domain-containing protein L76 (551 aa).

Residues 19–90 (TDIILEIEDD…FYGQENDVID (72 aa)) enclose the BTB domain.

The protein belongs to the mimivirus BTB/WD family.

In Acanthamoeba polyphaga (Amoeba), this protein is Putative BTB/POZ domain-containing protein L76.